We begin with the raw amino-acid sequence, 502 residues long: Protein DETOXIFICATION 7 (502 aa).

12 helical membrane passes run 36 to 56, 68 to 88, 112 to 132, 143 to 163, 182 to 202, 208 to 228, 262 to 282, 291 to 311, 331 to 351, 375 to 395, 408 to 428, and 436 to 456; these read MAAP…ISMV, AVAI…VGFA, YSSM…WFFM, PLIS…LFGF, LFVS…LLVY, IVGA…LLWI, AMMI…SGLL, VISI…AIGA, AAVN…TITL, ITPI…LSGV, ASLG…CFVM, and WIGI…VTFF.

It belongs to the multi antimicrobial extrusion (MATE) (TC 2.A.66.1) family.

The protein resides in the membrane. The chain is Protein DETOXIFICATION 7 from Arabidopsis thaliana (Mouse-ear cress).